The following is a 377-amino-acid chain: Chaperone protein DnaJ (377 aa).

In terms of domain architecture, J spans 5–70 (DYYEVLGVSR…DKKAAYDQFG (66 aa)). The CR-type zinc finger occupies 133–211 (GLTKELRIPT…CHGDGRVEKS (79 aa)). Zn(2+) contacts are provided by cysteine 146, cysteine 149, cysteine 163, cysteine 166, cysteine 185, cysteine 188, cysteine 199, and cysteine 202. 4 CXXCXGXG motif repeats span residues 146 to 153 (CDLCEGSG), 163 to 170 (CGTCHGQG), 185 to 192 (CPTCHGRG), and 199 to 206 (CTKCHGDG).

It belongs to the DnaJ family. Homodimer. Requires Zn(2+) as cofactor.

Its subcellular location is the cytoplasm. In terms of biological role, participates actively in the response to hyperosmotic and heat shock by preventing the aggregation of stress-denatured proteins and by disaggregating proteins, also in an autonomous, DnaK-independent fashion. Unfolded proteins bind initially to DnaJ; upon interaction with the DnaJ-bound protein, DnaK hydrolyzes its bound ATP, resulting in the formation of a stable complex. GrpE releases ADP from DnaK; ATP binding to DnaK triggers the release of the substrate protein, thus completing the reaction cycle. Several rounds of ATP-dependent interactions between DnaJ, DnaK and GrpE are required for fully efficient folding. Also involved, together with DnaK and GrpE, in the DNA replication of plasmids through activation of initiation proteins. This is Chaperone protein DnaJ from Shewanella baltica (strain OS223).